The sequence spans 717 residues: Eukaryotic translation initiation factor 3 subunit B (717 aa).

Residues 1 to 89 form a sufficient for interaction with HCR1 and TIF32 region; that stretch reads MTVEDNLDID…VFIEYETGEM (89 aa). The segment at 1–216 is sufficient for interaction with PIC8; that stretch reads MTVEDNLDID…GVQLWGGPDW (216 aa). The region spanning 28–115 is the RRM domain; the sequence is SFIVVDGAPV…HKLLVNKLSE (88 aa). 6 WD repeats span residues 183–221, 223–284, 293–332, 445–484, 506–549, and 564–609; these read RERW…PPIC, FQHP…PVRT, GASM…LLDK, ELKD…NRHT, FDKK…DRKH, and SEHY…QREE.

The protein belongs to the eIF-3 subunit B family. In terms of assembly, component of the eukaryotic translation initiation factor 3 (eIF-3) complex.

It localises to the cytoplasm. Functionally, RNA-binding component of the eukaryotic translation initiation factor 3 (eIF-3) complex, which is involved in protein synthesis of a specialized repertoire of mRNAs and, together with other initiation factors, stimulates binding of mRNA and methionyl-tRNAi to the 40S ribosome. The eIF-3 complex specifically targets and initiates translation of a subset of mRNAs involved in cell proliferation. This chain is Eukaryotic translation initiation factor 3 subunit B, found in Yarrowia lipolytica (strain CLIB 122 / E 150) (Yeast).